Reading from the N-terminus, the 69-residue chain is Large ribosomal subunit protein uL29 (69 aa).

It belongs to the universal ribosomal protein uL29 family.

The polypeptide is Large ribosomal subunit protein uL29 (Lachnoclostridium phytofermentans (strain ATCC 700394 / DSM 18823 / ISDg) (Clostridium phytofermentans)).